A 459-amino-acid chain; its full sequence is MSRLWGGRFRKETDPLVEEFHSSLSFDRRLYAYDIRGSIAHARMLGRVGIISAEEARTLEAGLYAVLDDFNAGRVAFSPEDEDIHSLVERLLIARVGEVGKKLHTARSRNDQVALDVRMYLKDEIDAVRELLAELQHTLLDLAERHIETLLPGYTHLQRAQPVTLAHHLLAYVEMFHRDAERLADCRRRTDVLPLGAGALAGTVFPIDREYTAAELGFAALAENSLDAVSDRDFAVEFCAAAALIMVHLSRFCEELVLWSTAEFGFAEMDDAFATGSSMMPQKKNPDMAELIRGKSGRVFGDLQALLAMLKGLPLAYNKDMQEDKEALFDAVDTVKKCLMVFTAMIGTVSFREQAMDRAVRGGFTNATDLADYLAGRGVPFREAHEIVGEIVLYALETGKTLEELTLEEYRRFSAAVGEDVYAAIRVEHCLAARKVHGGPAPETVRAAIARARKRLERV.

This sequence belongs to the lyase 1 family. Argininosuccinate lyase subfamily.

Its subcellular location is the cytoplasm. It carries out the reaction 2-(N(omega)-L-arginino)succinate = fumarate + L-arginine. It functions in the pathway amino-acid biosynthesis; L-arginine biosynthesis; L-arginine from L-ornithine and carbamoyl phosphate: step 3/3. The protein is Argininosuccinate lyase of Desulforudis audaxviator (strain MP104C).